Reading from the N-terminus, the 301-residue chain is MKTKAGFVALIGKPNAGKSTLLNTLLNAHLALVSHKANATRKLMKCIVPFKDKEGYESQIIFLDTPGLHHQEKLLNQCMLSQALKAMGDAELCVFLASVHDDLKGYEEFLNLCQKPHILALSKIDTATHKQVLQKLQEYQQYASQFLSLIPLSAKKSQNLNALLECISEHLSPSAWLFEKDLMSDEKMRDIYKEIIRESLFCFLSDEIPYESDVIIDKFIEEECIDKVYAHIIVEKESQKKIVIGKNGVNIKRIGTNARLKMQEVGEKKVFLNLQVIAQKSWSKEEKSLQKLGYIYQRNRD.

Residues 4-173 enclose the Era-type G domain; that stretch reads KAGFVALIGK…LECISEHLSP (170 aa). The tract at residues 12-19 is G1; the sequence is GKPNAGKS. GTP is bound at residue 12–19; sequence GKPNAGKS. Positions 38–42 are G2; sequence NATRK. The interval 64 to 67 is G3; that stretch reads DTPG. GTP is bound by residues 64-68 and 122-125; these read DTPGL and SKID. The tract at residues 122 to 125 is G4; that stretch reads SKID. Residues 152–154 form a G5 region; that stretch reads LSA. The KH type-2 domain occupies 204–280; sequence LSDEIPYESD…FLNLQVIAQK (77 aa).

Belongs to the TRAFAC class TrmE-Era-EngA-EngB-Septin-like GTPase superfamily. Era GTPase family. As to quaternary structure, monomer.

The protein localises to the cytoplasm. Its subcellular location is the cell inner membrane. Functionally, an essential GTPase that binds both GDP and GTP, with rapid nucleotide exchange. Plays a role in 16S rRNA processing and 30S ribosomal subunit biogenesis and possibly also in cell cycle regulation and energy metabolism. The polypeptide is GTPase Era (Helicobacter acinonychis (strain Sheeba)).